The primary structure comprises 403 residues: Decapping and exoribonuclease protein 1 (403 aa).

Position 223 (Glu-223) interacts with a divalent metal cation. Glu-260 is a substrate binding site. The a divalent metal cation site is built by Asp-262, Glu-273, and Ile-274. Residues Lys-275 and Gln-297 each coordinate substrate.

This sequence belongs to the DXO/Dom3Z family. A divalent metal cation is required as a cofactor.

Its subcellular location is the cytoplasm. It catalyses the reaction a 5'-end NAD(+)-phospho-ribonucleoside in mRNA + H2O = a 5'-end phospho-ribonucleoside in mRNA + NAD(+) + H(+). It carries out the reaction a 5'-end (N(7)-methyl 5'-triphosphoguanosine)-ribonucleoside-ribonucleotide in mRNA + H2O = a (N(7)-methyl 5'-triphosphoguanosine)-nucleoside + a 5'-end phospho-ribonucleoside in mRNA + H(+). Functionally, decapping enzyme for NAD-capped RNAs: specifically hydrolyzes the nicotinamide adenine dinucleotide (NAD) cap from a subset of RNAs by removing the entire NAD moiety from the 5'-end of an NAD-capped RNA. The NAD-cap is present at the 5'-end of some RNAs and snoRNAs. In contrast to the canonical 5'-end N7 methylguanosine (m7G) cap, the NAD cap promotes mRNA decay. Also acts as a non-canonical decapping enzyme that removes the entire cap structure of m7G capped or incompletely capped RNAs and mediates their subsequent degradation. Has decapping and 5'-3' exonuclease activities. Has decapping activity toward incomplete 5'-end cap mRNAs such as unmethylated 5'-end-capped RNA to release GpppN and 5'-end monophosphate RNA. The 5'-end monophosphate RNA is then degraded by the 5'-3' exoribonuclease activity, enabling this enzyme to decap and degrade incompletely capped mRNAs. This is Decapping and exoribonuclease protein 1 from Kluyveromyces lactis (strain ATCC 8585 / CBS 2359 / DSM 70799 / NBRC 1267 / NRRL Y-1140 / WM37) (Yeast).